Reading from the N-terminus, the 215-residue chain is Cytochrome b6 (215 aa).

A helical transmembrane segment spans residues 32–52 (IFYCLGGITLTCFLVQVATGF). Residue Cys-35 participates in heme c binding. Positions 86 and 100 each coordinate heme b. Transmembrane regions (helical) follow at residues 90–110 (ASMM…TGGF), 116–136 (LTWV…VTGY), and 186–206 (LHTF…FPMI). The heme b site is built by His-187 and His-202.

It belongs to the cytochrome b family. PetB subfamily. In terms of assembly, the 4 large subunits of the cytochrome b6-f complex are cytochrome b6, subunit IV (17 kDa polypeptide, PetD), cytochrome f and the Rieske protein, while the 4 small subunits are PetG, PetL, PetM and PetN. The complex functions as a dimer. Heme b is required as a cofactor. The cofactor is heme c.

The protein resides in the plastid. It is found in the chloroplast thylakoid membrane. Component of the cytochrome b6-f complex, which mediates electron transfer between photosystem II (PSII) and photosystem I (PSI), cyclic electron flow around PSI, and state transitions. The chain is Cytochrome b6 from Populus alba (White poplar).